The following is a 426-amino-acid chain: Serine--tRNA ligase (426 aa).

Position 233–235 (233–235 (TAE)) interacts with L-serine. 264–266 (RSE) is a binding site for ATP. Glu287 is a binding site for L-serine. 351-354 (EISS) lines the ATP pocket. Position 387 (Ser387) interacts with L-serine.

This sequence belongs to the class-II aminoacyl-tRNA synthetase family. Type-1 seryl-tRNA synthetase subfamily. Homodimer. The tRNA molecule binds across the dimer.

The protein localises to the cytoplasm. The enzyme catalyses tRNA(Ser) + L-serine + ATP = L-seryl-tRNA(Ser) + AMP + diphosphate + H(+). It catalyses the reaction tRNA(Sec) + L-serine + ATP = L-seryl-tRNA(Sec) + AMP + diphosphate + H(+). It participates in aminoacyl-tRNA biosynthesis; selenocysteinyl-tRNA(Sec) biosynthesis; L-seryl-tRNA(Sec) from L-serine and tRNA(Sec): step 1/1. Its function is as follows. Catalyzes the attachment of serine to tRNA(Ser). Is also able to aminoacylate tRNA(Sec) with serine, to form the misacylated tRNA L-seryl-tRNA(Sec), which will be further converted into selenocysteinyl-tRNA(Sec). In Pseudomonas fluorescens (strain Pf0-1), this protein is Serine--tRNA ligase.